Here is a 277-residue protein sequence, read N- to C-terminus: Probable septum site-determining protein MinC (277 aa).

The tract at residues 107-168 (TEGLLPGRKG…ESGPQVSHYD (62 aa)) is disordered. The segment covering 122 to 142 (GKPDGKAAEGRAPDHGTEGRA) has biased composition (basic and acidic residues).

It belongs to the MinC family. In terms of assembly, interacts with MinD and FtsZ.

Its function is as follows. Cell division inhibitor that blocks the formation of polar Z ring septums. Rapidly oscillates between the poles of the cell to destabilize FtsZ filaments that have formed before they mature into polar Z rings. Prevents FtsZ polymerization. In Mesorhizobium japonicum (strain LMG 29417 / CECT 9101 / MAFF 303099) (Mesorhizobium loti (strain MAFF 303099)), this protein is Probable septum site-determining protein MinC.